A 124-amino-acid polypeptide reads, in one-letter code: Small ribosomal subunit protein uS12 (124 aa).

The tract at residues 1-32 (MPTINQLVRKGRRDKTAKVKTAALKGSPQRRG) is disordered. Residue Asp-89 is modified to 3-methylthioaspartic acid. The tract at residues 104-124 (TQGVKGRKQARSRYGAKKEKS) is disordered. A compositionally biased stretch (basic residues) spans 108-118 (KGRKQARSRYG).

It belongs to the universal ribosomal protein uS12 family. Part of the 30S ribosomal subunit. Contacts proteins S8 and S17. May interact with IF1 in the 30S initiation complex.

Its function is as follows. With S4 and S5 plays an important role in translational accuracy. In terms of biological role, interacts with and stabilizes bases of the 16S rRNA that are involved in tRNA selection in the A site and with the mRNA backbone. Located at the interface of the 30S and 50S subunits, it traverses the body of the 30S subunit contacting proteins on the other side and probably holding the rRNA structure together. The combined cluster of proteins S8, S12 and S17 appears to hold together the shoulder and platform of the 30S subunit. The chain is Small ribosomal subunit protein uS12 from Rhodococcus jostii (strain RHA1).